Consider the following 313-residue polypeptide: Ribosomal protein L11 methyltransferase (313 aa).

The S-adenosyl-L-methionine site is built by Thr151, Gly172, Asp194, and Asn245.

Belongs to the methyltransferase superfamily. PrmA family.

Its subcellular location is the cytoplasm. The catalysed reaction is L-lysyl-[protein] + 3 S-adenosyl-L-methionine = N(6),N(6),N(6)-trimethyl-L-lysyl-[protein] + 3 S-adenosyl-L-homocysteine + 3 H(+). Methylates ribosomal protein L11. The protein is Ribosomal protein L11 methyltransferase of Nitrosomonas europaea (strain ATCC 19718 / CIP 103999 / KCTC 2705 / NBRC 14298).